We begin with the raw amino-acid sequence, 319 residues long: Probable deoxyhypusine synthase (319 aa).

K287 acts as the Nucleophile in catalysis.

This sequence belongs to the deoxyhypusine synthase family. It depends on NAD(+) as a cofactor.

It catalyses the reaction [eIF5A protein]-L-lysine + spermidine = [eIF5A protein]-deoxyhypusine + propane-1,3-diamine. Its pathway is protein modification; eIF5A hypusination. In terms of biological role, catalyzes the NAD-dependent oxidative cleavage of spermidine and the subsequent transfer of the butylamine moiety of spermidine to the epsilon-amino group of a specific lysine residue of the eIF-5A precursor protein to form the intermediate deoxyhypusine residue. This is Probable deoxyhypusine synthase from Ignicoccus hospitalis (strain KIN4/I / DSM 18386 / JCM 14125).